An 87-amino-acid polypeptide reads, in one-letter code: UPF0250 protein KPN78578_06520 (87 aa).

The protein belongs to the UPF0250 family.

The sequence is that of UPF0250 protein KPN78578_06520 from Klebsiella pneumoniae subsp. pneumoniae (strain ATCC 700721 / MGH 78578).